We begin with the raw amino-acid sequence, 114 residues long: Large ribosomal subunit protein bL20 (114 aa).

This sequence belongs to the bacterial ribosomal protein bL20 family.

In terms of biological role, binds directly to 23S ribosomal RNA and is necessary for the in vitro assembly process of the 50S ribosomal subunit. It is not involved in the protein synthesizing functions of that subunit. This chain is Large ribosomal subunit protein bL20, found in Anaeromyxobacter dehalogenans (strain 2CP-C).